The sequence spans 520 residues: Developmental regulatory protein wetA (520 aa).

3 stretches are compositionally biased toward polar residues: residues 109–118 (TATHALSISP), 155–165 (QSFSPSLMRSS), and 378–392 (SSQKFDTSYTSSQVH). Disordered stretches follow at residues 109 to 165 (TATH…MRSS), 378 to 454 (SSQK…SNKS), and 468 to 496 (KKILTGVAPSGSSKTKARREQEARDRRRK). A compositionally biased stretch (basic residues) spans 420-429 (PTHRRTHSRK). A compositionally biased stretch (low complexity) spans 445–454 (SSSSRGSNKS).

This sequence belongs to the wetA family.

Functionally, brlA, abaA and wetA are pivotal regulators of conidiophore development and conidium maturation. They act individually and together to regulate their own expression and that of numerous other sporulation-specific genes. The polypeptide is Developmental regulatory protein wetA (Penicillium roqueforti (strain FM164)).